Reading from the N-terminus, the 114-residue chain is T-cell leukemia/lymphoma protein 1A (114 aa).

The protein belongs to the TCL1 family. In terms of assembly, homodimer. Interacts with AKT1, AKT2 and AKT3 (via PH domain). Interacts with PNPT1; the interaction has no effect on PNPT1 exonuclease activity. In terms of tissue distribution, restricted in the T-cell lineage to immature thymocytes and activated peripheral lymphocytes. Preferentially expressed early in T- and B-lymphocyte differentiation.

Its subcellular location is the cytoplasm. The protein resides in the nucleus. The protein localises to the microsome. It is found in the endoplasmic reticulum. Enhances the phosphorylation and activation of AKT1, AKT2 and AKT3. Promotes nuclear translocation of AKT1. Enhances cell proliferation, stabilizes mitochondrial membrane potential and promotes cell survival. The chain is T-cell leukemia/lymphoma protein 1A (TCL1A) from Homo sapiens (Human).